A 497-amino-acid chain; its full sequence is Transcription termination/antitermination protein NusA (497 aa).

The 66-residue stretch at 135 to 200 folds into the S1 motif domain; that stretch reads GKILTGIVKK…RGAQLFVTRS (66 aa). The KH domain maps to 302–372; it reads RHTIDIAVDS…LKIDQKISNI (71 aa). A run of 2 repeats spans residues 364 to 414 and 439 to 489. The tract at residues 364–489 is 2 X 51 AA approximate repeats; it reads KIDQKISNIL…MLIMAARNIC (126 aa).

This sequence belongs to the NusA family. Monomer. Binds directly to the core enzyme of the DNA-dependent RNA polymerase and to nascent RNA.

Its subcellular location is the cytoplasm. In terms of biological role, participates in both transcription termination and antitermination. In Buchnera aphidicola subsp. Baizongia pistaciae (strain Bp), this protein is Transcription termination/antitermination protein NusA.